We begin with the raw amino-acid sequence, 201 residues long: dCTP deaminase, dUMP-forming (201 aa).

DCTP contacts are provided by residues 101-106 (KSSLGR), D119, 127-129 (TLE), Q148, Y162, and Q174. The active-site Proton donor/acceptor is the E129.

The protein belongs to the dCTP deaminase family. In terms of assembly, homotrimer.

It carries out the reaction dCTP + 2 H2O = dUMP + NH4(+) + diphosphate. The protein operates within pyrimidine metabolism; dUMP biosynthesis; dUMP from dCTP: step 1/1. Its function is as follows. Bifunctional enzyme that catalyzes both the deamination of dCTP to dUTP and the hydrolysis of dUTP to dUMP without releasing the toxic dUTP intermediate. The polypeptide is dCTP deaminase, dUMP-forming (Clavibacter michiganensis subsp. michiganensis (strain NCPPB 382)).